We begin with the raw amino-acid sequence, 472 residues long: 7-dimethylallyltryptophan synthase hasE (472 aa).

Glu-138 provides a ligand contact to L-tryptophan. Residues Arg-154, Lys-239, Tyr-241, Lys-313, Tyr-315, Tyr-393, Tyr-460, and Tyr-464 each coordinate dimethylallyl diphosphate.

The protein belongs to the tryptophan dimethylallyltransferase family. As to quaternary structure, homodimer.

It catalyses the reaction L-tryptophan + dimethylallyl diphosphate = 7-(3-methylbut-2-enyl)-L-tryptophan + diphosphate. It carries out the reaction an N-terminal L-tryptophanyl-L-alpha-aminoacyl-[peptide] + H2O = an N-terminal L-alpha-aminoacyl-[peptide] + L-tryptophan. It participates in secondary metabolite biosynthesis. 7-dimethylallyltryptophan synthase; part of the gene cluster that mediates the biosynthesis of hexadehydro-astechrome (HAS), a tryptophan-derived iron(III)-complex that acts as a virulence factor in infected mice. Catalyzes the prenylation of L-tryptophan at the C-7 position of the indole moiety. The enzyme is specific for dimethylallyl diphosphate (DMAPP) as prenyl donor. Also accepts D-tryptophan, typtophan-derivatives with modifications at the side chain or the indole ring, and linear and cyclic dipeptides such as H-L-Trp-L-Gly-OH or cyclo-L-Trp-L-Gly as substrates, however with lower efficiency. Also has tryptophan aminopeptidase activity towards linear peptides with a tryptophanyl moiety at the N-terminus. Dipeptides are better substrates than peptides with 3 or more amino acids. Enzymatic rate constants however are much higher for the prenyltransferase activity than for the aminopeptidase activity. Within the hexadehydro-astechrome biosyntetic pathway, hasE catalyzes the prenylation of the hasD-tethered tryptophan or the resulting tethered Trp-Ala dipeptid. The HAS biosynthesis begins with the synthesis of a tethered Trp-Ala dipeptide by the NRPS hasD. The 7-dimethylallyltryptophan synthase hasE then catalyzes the prenylation of the hasD-tethered tryptophan or the resulting tethered Trp-Ala dipeptide at the C-7 position of the indole moiety. HAS biosynthesis continues via tethered intermediates with the succesive actions of the cytochrome P450 monooxygenase hasH, the O-methyltransferase hasC, and the FAD-linked oxidoreductase hasG. The resulting O-methylated diketopiperazine is then released from hasD. Finally, three O-methylated diketopiperazine molecules assemble in a trimeric complex with Fe(III) to produce hexadehydro-astechrome. The sequence is that of 7-dimethylallyltryptophan synthase hasE from Aspergillus fumigatus (strain CBS 144.89 / FGSC A1163 / CEA10) (Neosartorya fumigata).